The sequence spans 150 residues: Cyanate hydratase (150 aa).

Residues Arg91, Glu94, and Ser117 contribute to the active site.

This sequence belongs to the cyanase family.

The enzyme catalyses cyanate + hydrogencarbonate + 3 H(+) = NH4(+) + 2 CO2. Its function is as follows. Catalyzes the reaction of cyanate with bicarbonate to produce ammonia and carbon dioxide. The polypeptide is Cyanate hydratase (Synechococcus sp. (strain CC9311)).